A 112-amino-acid chain; its full sequence is Small ribosomal subunit protein bS6 (112 aa).

The protein belongs to the bacterial ribosomal protein bS6 family.

Binds together with bS18 to 16S ribosomal RNA. In Chlamydia caviae (strain ATCC VR-813 / DSM 19441 / 03DC25 / GPIC) (Chlamydophila caviae), this protein is Small ribosomal subunit protein bS6.